The sequence spans 487 residues: FAD-dependent oxidoreductase domain-containing protein 1 (487 aa).

Residues 62–82 (EQADVVIIGGGILGLSVAFWL) form a helical membrane-spanning segment.

In terms of assembly, associates with components of the mitochondrial respiratory chain complex I. It depends on FAD as a cofactor.

Its subcellular location is the mitochondrion inner membrane. Required for the assembly of the mitochondrial membrane respiratory chain NADH dehydrogenase (Complex I). Involved in mid-late stages of complex I assembly. The polypeptide is FAD-dependent oxidoreductase domain-containing protein 1 (Foxred1) (Mus musculus (Mouse)).